Reading from the N-terminus, the 403-residue chain is MTHRRDTVQMEQRWTNARLATMAGDDLGLIDDGVVAAKDGRIIYAGPAKDAPATQGAVHDCEGRLITPGLIDCHTHLIHGGNRANEWAMRLEGASYDEIARAGGGIVSTMRATRDASEAELVASALPRLDALIAEGVTTIEIKSGYGLSTNDELKMLRAARALANIRAIRVEPTFLGAHALPPEYQGDSDAYIDLVVGEMIPAVASLATAVDAFCEGIGFSPEQCARVLAAAKAHGLKVKLHAEQLSALHGSALAARHGALSADHLEHATDEDVRAMAEAGSVAVLLPGAYYFMRETRLPPVQAMRRHGTRIALATDNNPGTSPTSSLLLMLNMGATLFGLTVIEALRGVTVNAAAALGLSAEIGTIEVGKACDLAIWDVGDPAELVYRIGFNPLHQRIKDGQ.

Fe(3+) is bound by residues His-74 and His-76. Positions 74 and 76 each coordinate Zn(2+). Arg-83, Tyr-146, and His-179 together coordinate 4-imidazolone-5-propanoate. Position 146 (Tyr-146) interacts with N-formimidoyl-L-glutamate. His-242 is a Fe(3+) binding site. His-242 contacts Zn(2+). A 4-imidazolone-5-propanoate-binding site is contributed by Gln-245. Asp-317 is a Fe(3+) binding site. Residue Asp-317 coordinates Zn(2+). Residues Asn-319 and Gly-321 each contribute to the N-formimidoyl-L-glutamate site. A 4-imidazolone-5-propanoate-binding site is contributed by Thr-322.

It belongs to the metallo-dependent hydrolases superfamily. HutI family. Zn(2+) is required as a cofactor. Requires Fe(3+) as cofactor.

The protein localises to the cytoplasm. The catalysed reaction is 4-imidazolone-5-propanoate + H2O = N-formimidoyl-L-glutamate. The protein operates within amino-acid degradation; L-histidine degradation into L-glutamate; N-formimidoyl-L-glutamate from L-histidine: step 3/3. In terms of biological role, catalyzes the hydrolytic cleavage of the carbon-nitrogen bond in imidazolone-5-propanoate to yield N-formimidoyl-L-glutamate. It is the third step in the universal histidine degradation pathway. This chain is Imidazolonepropionase, found in Sphingopyxis alaskensis (strain DSM 13593 / LMG 18877 / RB2256) (Sphingomonas alaskensis).